We begin with the raw amino-acid sequence, 84 residues long: Polcalcin Ole e 3 (84 aa).

EF-hand domains are found at residues 6–40 (QEVA…TLGS) and 41–76 (VTPE…NRGL). Residues Asp-19, Asn-21, Asp-23, Lys-25, Glu-30, Asp-54, Asp-56, Asp-58, and Glu-65 each coordinate Ca(2+).

Expressed exclusively in mature pollen.

It localises to the endomembrane system. In Olea europaea (Common olive), this protein is Polcalcin Ole e 3 (OLE3).